Consider the following 139-residue polypeptide: MANARSGVAVNDECMLKFGELQSKRLHRFITFKMDDKFKEIVVDQVGDRATSYDDFTNSLPENDCRYAIYDFDFVTAEDVQKSRIFYILWSPSSAKVKSKMLYASSNQKFKSGLNGIQVELQATDASEISLDEIKDRAR.

An ADF-H domain is found at 7 to 139 (GVAVNDECML…SLDEIKDRAR (133 aa)).

Belongs to the actin-binding proteins ADF family. In terms of tissue distribution, expressed in all tissues except pollen.

The protein resides in the cytoplasm. Actin-depolymerizing protein. Severs actin filaments (F-actin) and binds to actin monomers. The protein is Actin-depolymerizing factor 3 (ADF3) of Zea mays (Maize).